Consider the following 506-residue polypeptide: Maturase K (506 aa).

Belongs to the intron maturase 2 family. MatK subfamily.

It is found in the plastid. The protein localises to the chloroplast. Its function is as follows. Usually encoded in the trnK tRNA gene intron. Probably assists in splicing its own and other chloroplast group II introns. The sequence is that of Maturase K from Prunus dulcis (Almond).